The sequence spans 148 residues: Cuticle protein CP1499 (148 aa).

Calcified shell.

The polypeptide is Cuticle protein CP1499 (Cancer pagurus (Rock crab)).